Consider the following 254-residue polypeptide: Phosphoribosylaminoimidazole-succinocarboxamide synthase (254 aa).

This sequence belongs to the SAICAR synthetase family.

The catalysed reaction is 5-amino-1-(5-phospho-D-ribosyl)imidazole-4-carboxylate + L-aspartate + ATP = (2S)-2-[5-amino-1-(5-phospho-beta-D-ribosyl)imidazole-4-carboxamido]succinate + ADP + phosphate + 2 H(+). It participates in purine metabolism; IMP biosynthesis via de novo pathway; 5-amino-1-(5-phospho-D-ribosyl)imidazole-4-carboxamide from 5-amino-1-(5-phospho-D-ribosyl)imidazole-4-carboxylate: step 1/2. The chain is Phosphoribosylaminoimidazole-succinocarboxamide synthase from Bartonella henselae (strain ATCC 49882 / DSM 28221 / CCUG 30454 / Houston 1) (Rochalimaea henselae).